Reading from the N-terminus, the 139-residue chain is Large ribosomal subunit protein bL21 (139 aa).

The protein belongs to the bacterial ribosomal protein bL21 family. In terms of assembly, part of the 50S ribosomal subunit. Contacts protein L20.

In terms of biological role, this protein binds to 23S rRNA in the presence of protein L20. This Prochlorococcus marinus (strain NATL1A) protein is Large ribosomal subunit protein bL21.